The sequence spans 65 residues: Conotoxin tx3c (65 aa).

The first 19 residues, 1 to 19 (MFKLGVLLTICLLLFSLNA), serve as a signal peptide directing secretion. A propeptide spanning residues 20-50 (VPLDGDQPADQPAERLLDDISFENNPFYDPA) is cleaved from the precursor. Intrachain disulfides connect C53–C64, C54–C60, and C57–C63. Position 62 is a 4-hydroxyproline; partial (P62). C64 carries the post-translational modification Cysteine amide.

In terms of processing, the hydroxylation at Pro-62 is observed in PubMed:15924437, PubMed:19380747 and PubMed:22709442, and the non-hydroxylation is described in PubMed:22709442. In terms of tissue distribution, expressed by the venom duct.

The protein localises to the secreted. Its function is as follows. Causes scratching in mice. In Conus textile (Cloth-of-gold cone), this protein is Conotoxin tx3c.